The primary structure comprises 547 residues: Methionine--tRNA ligase (547 aa).

The short motif at 15-25 (PYANGSIHIGH) is the 'HIGH' region element. Zn(2+) contacts are provided by C146, C149, C159, and C162. The 'KMSKS' region motif lies at 332 to 336 (KLSKS). An ATP-binding site is contributed by K335.

Belongs to the class-I aminoacyl-tRNA synthetase family. MetG type 1 subfamily. In terms of assembly, monomer. Zn(2+) is required as a cofactor.

It localises to the cytoplasm. It catalyses the reaction tRNA(Met) + L-methionine + ATP = L-methionyl-tRNA(Met) + AMP + diphosphate. Its function is as follows. Is required not only for elongation of protein synthesis but also for the initiation of all mRNA translation through initiator tRNA(fMet) aminoacylation. The sequence is that of Methionine--tRNA ligase (metG) from Buchnera aphidicola subsp. Acyrthosiphon pisum (strain APS) (Acyrthosiphon pisum symbiotic bacterium).